The primary structure comprises 225 residues: 2-C-methyl-D-erythritol 4-phosphate cytidylyltransferase (225 aa).

It belongs to the IspD/TarI cytidylyltransferase family. IspD subfamily.

It catalyses the reaction 2-C-methyl-D-erythritol 4-phosphate + CTP + H(+) = 4-CDP-2-C-methyl-D-erythritol + diphosphate. Its pathway is isoprenoid biosynthesis; isopentenyl diphosphate biosynthesis via DXP pathway; isopentenyl diphosphate from 1-deoxy-D-xylulose 5-phosphate: step 2/6. In terms of biological role, catalyzes the formation of 4-diphosphocytidyl-2-C-methyl-D-erythritol from CTP and 2-C-methyl-D-erythritol 4-phosphate (MEP). This chain is 2-C-methyl-D-erythritol 4-phosphate cytidylyltransferase, found in Clostridium perfringens (strain SM101 / Type A).